We begin with the raw amino-acid sequence, 547 residues long: CTP synthase (547 aa).

Positions 1 to 265 (MTRYVFITGG…DEIVLRKLHI (265 aa)) are amidoligase domain. Ser13 contacts CTP. Ser13 contacts UTP. Residues 14–19 (SLGKGI) and Asp71 contribute to the ATP site. Positions 71 and 139 each coordinate Mg(2+). CTP contacts are provided by residues 146–148 (DIE), 186–191 (KTKPTQ), and Lys222. Residues 186-191 (KTKPTQ) and Lys222 contribute to the UTP site. A Glutamine amidotransferase type-1 domain is found at 290 to 541 (TVGMVGKYVD…IRAARAQHEK (252 aa)). Gly351 provides a ligand contact to L-glutamine. Cys378 functions as the Nucleophile; for glutamine hydrolysis in the catalytic mechanism. L-glutamine contacts are provided by residues 379 to 382 (LGMQ), Glu402, and Arg469. Active-site residues include His514 and Glu516.

The protein belongs to the CTP synthase family. In terms of assembly, homotetramer.

It carries out the reaction UTP + L-glutamine + ATP + H2O = CTP + L-glutamate + ADP + phosphate + 2 H(+). It catalyses the reaction L-glutamine + H2O = L-glutamate + NH4(+). The catalysed reaction is UTP + NH4(+) + ATP = CTP + ADP + phosphate + 2 H(+). It participates in pyrimidine metabolism; CTP biosynthesis via de novo pathway; CTP from UDP: step 2/2. With respect to regulation, allosterically activated by GTP, when glutamine is the substrate; GTP has no effect on the reaction when ammonia is the substrate. The allosteric effector GTP functions by stabilizing the protein conformation that binds the tetrahedral intermediate(s) formed during glutamine hydrolysis. Inhibited by the product CTP, via allosteric rather than competitive inhibition. Catalyzes the ATP-dependent amination of UTP to CTP with either L-glutamine or ammonia as the source of nitrogen. Regulates intracellular CTP levels through interactions with the four ribonucleotide triphosphates. The sequence is that of CTP synthase from Thioalkalivibrio sulfidiphilus (strain HL-EbGR7).